A 144-amino-acid chain; its full sequence is MLVPKRVKYRRVHRGKMRGEAKGGKTVAFGDYGLQTLESHWISNRQIEAARVAMNRYMKRGGKVWIKIFPHKSYTEKGVGVRMGNGKGTPAGWVAPVKRNKIMFEVAGVPEEVAREALRLAGTKLPVKTKIVKREEVGGESDEG.

The protein belongs to the universal ribosomal protein uL16 family. Part of the 50S ribosomal subunit.

Functionally, binds 23S rRNA and is also seen to make contacts with the A and possibly P site tRNAs. The chain is Large ribosomal subunit protein uL16 from Lactiplantibacillus plantarum (strain ATCC BAA-793 / NCIMB 8826 / WCFS1) (Lactobacillus plantarum).